The following is a 591-amino-acid chain: Peroxisome assembly protein 2 (591 aa).

Residues 1 to 78 form a disordered region; that stretch reads MSDSDPKPTA…TNIDTNNNTN (78 aa). Residues 1 to 148 are Peroxisomal matrix-facing; sequence MSDSDPKPTA…TSREGTRPAF (148 aa). Positions 7–26 are enriched in low complexity; sequence KPTAAKGAAPTSIPNSTRNP. Pro residues predominate over residues 27–54; it reads NPTPPNPNPNPNPISTPAPTPTATPSPP. A compositionally biased stretch (low complexity) spans 55 to 78; it reads IASSSNNGNNSTRSTNIDTNNNTN. The helical transmembrane segment at 149-175 threads the bilayer; sequence RVGQVDAELLDEELVELLRGQVREALR. Over 176 to 196 the chain is Cytoplasmic; the sequence is YVGGGGGGGGGGGGGGVGSGV. The chain crosses the membrane as a helical span at residues 197–222; the sequence is AQDWEAEISLALRAVLFKLTVWDHDA. The Peroxisomal matrix segment spans residues 223 to 246; sequence TYGAALQNLKYTDARRDGPALAPP. The helical transmembrane segment at 247–273 threads the bilayer; that stretch reads SRWQKALYGLVTVGGRYLWAKWEDWLL. Topologically, residues 274 to 283 are cytoplasmic; the sequence is EQDDGFEGPS. Residues 284 to 314 form a helical membrane-spanning segment; that stretch reads PRVKRLARWTSALSTLHASAALVSFLVFLLH. Residues 315–341 are Peroxisomal matrix-facing; sequence GRYRTLLDRLLRMRLAPPTSQVSREVS. A helical membrane pass occupies residues 342–365; sequence FEYLNRQLVWHAFTEFLLFVLPLV. Residues 366–591 lie on the Cytoplasmic side of the membrane; sequence GINRWRRWLA…EDGLDEDPES (226 aa). 8 residues coordinate Zn(2+): Cys-408, Cys-411, Cys-449, Cys-451, Cys-454, Cys-457, Cys-472, and Cys-475. The RING-type; atypical zinc finger occupies 408–475; the sequence is CAICYRDQNS…EGEGWPCLRC (68 aa). Positions 512 to 591 are disordered; it reads KAPSDHEEEE…EDGLDEDPES (80 aa). Acidic residues-rich tracts occupy residues 517 to 537 and 575 to 591; these read HEEE…ENEG and SEDY…DPES.

This sequence belongs to the pex2/pex10/pex12 family. Component of the PEX2-PEX10-PEX12 retrotranslocation channel, composed of PEX2, PEX10 and PEX12.

Its subcellular location is the peroxisome membrane. The catalysed reaction is [E2 ubiquitin-conjugating enzyme]-S-ubiquitinyl-L-cysteine + [acceptor protein]-L-cysteine = [E2 ubiquitin-conjugating enzyme]-L-cysteine + [acceptor protein]-S-ubiquitinyl-L-cysteine.. Its pathway is protein modification; protein ubiquitination. In terms of biological role, E3 ubiquitin-protein ligase component of a retrotranslocation channel required for peroxisome organization by mediating export of the PEX5 receptor from peroxisomes to the cytosol, thereby promoting PEX5 recycling. The retrotranslocation channel is composed of PEX2, PEX10 and PEX12; each subunit contributing transmembrane segments that coassemble into an open channel that specifically allows the passage of PEX5 through the peroxisomal membrane. PEX2 also regulates peroxisome organization by acting as a E3 ubiquitin-protein ligase. PEX2 ubiquitinates PEX5 during its passage through the retrotranslocation channel: catalyzes monoubiquitination of PEX5 at 'Cys-6', a modification that acts as a signal for PEX5 extraction into the cytosol. The chain is Peroxisome assembly protein 2 from Thermothelomyces thermophilus (strain ATCC 42464 / BCRC 31852 / DSM 1799) (Sporotrichum thermophile).